The chain runs to 394 residues: Elongation factor Tu (394 aa).

The 195-residue stretch at 10–204 folds into the tr-type G domain; sequence KPHINVGTIG…SLDKYIPIPV (195 aa). The tract at residues 19-26 is G1; the sequence is GHVDHGKT. 19–26 is a binding site for GTP; that stretch reads GHVDHGKT. Thr-26 is a binding site for Mg(2+). Residues 60–64 form a G2 region; the sequence is GITIN. The interval 81 to 84 is G3; sequence DCPG. GTP is bound by residues 81–85 and 136–139; these read DCPGH and NKCD. The segment at 136-139 is G4; the sequence is NKCD. Positions 174 to 176 are G5; that stretch reads SAL.

Belongs to the TRAFAC class translation factor GTPase superfamily. Classic translation factor GTPase family. EF-Tu/EF-1A subfamily. Monomer.

The protein resides in the cytoplasm. It catalyses the reaction GTP + H2O = GDP + phosphate + H(+). Its function is as follows. GTP hydrolase that promotes the GTP-dependent binding of aminoacyl-tRNA to the A-site of ribosomes during protein biosynthesis. In Buchnera aphidicola subsp. Cinara cedri (strain Cc), this protein is Elongation factor Tu.